Here is a 658-residue protein sequence, read N- to C-terminus: Glycogen debranching enzyme (658 aa).

The active-site Nucleophile is Asp336. Glu371 (proton donor) is an active-site residue. Residues 459 to 484 are disordered; the sequence is EANGEENRDGTNSNYSDNHGKEGLGG.

It belongs to the glycosyl hydrolase 13 family.

It carries out the reaction Hydrolysis of (1-&gt;6)-alpha-D-glucosidic linkages to branches with degrees of polymerization of three or four glucose residues in limit dextrin.. It participates in glycan degradation; glycogen degradation. Its function is as follows. Removes maltotriose and maltotetraose chains that are attached by 1,6-alpha-linkage to the limit dextrin main chain, generating a debranched limit dextrin. In Salmonella choleraesuis (strain SC-B67), this protein is Glycogen debranching enzyme.